The following is a 312-amino-acid chain: Probable myosin light chain kinase DDB_G0282429 (312 aa).

The interval 1–28 is disordered; sequence MDRMDSSDEEIDNISDDELQSGDEIEVE. The segment covering 7–27 has biased composition (acidic residues); it reads SDEEIDNISDDELQSGDEIEV. The Protein kinase domain maps to 38-290; the sequence is YILGNEIGRG…FEQCLIHPWV (253 aa). ATP-binding positions include 44-52 and K67; that span reads IGRGAFSIV. D158 functions as the Proton acceptor in the catalytic mechanism.

Belongs to the protein kinase superfamily. CAMK Ser/Thr protein kinase family. CaMK subfamily.

It carries out the reaction L-seryl-[myosin light chain] + ATP = O-phospho-L-seryl-[myosin light chain] + ADP + H(+). It catalyses the reaction L-threonyl-[myosin light chain] + ATP = O-phospho-L-threonyl-[myosin light chain] + ADP + H(+). Its activity is regulated as follows. Does not have a calmodulin-binding domain. Its function is as follows. May phosphorylate a specific serine in the N-terminus of a myosin light chain. The sequence is that of Probable myosin light chain kinase DDB_G0282429 from Dictyostelium discoideum (Social amoeba).